The following is an 88-amino-acid chain: MASKKGVGSTKDGRDSIAKRLGAKRADGQFVTGGSILYRQRGTKVHPGLNVGRGGDDTLYAKIDGIVRFERLGRDRKRVSVYPVSQEA.

The tract at residues 1 to 20 (MASKKGVGSTKDGRDSIAKR) is disordered.

This sequence belongs to the bacterial ribosomal protein bL27 family.

The sequence is that of Large ribosomal subunit protein bL27 (rpmA) from Geobacillus stearothermophilus (Bacillus stearothermophilus).